The following is a 395-amino-acid chain: uncharacterized protein (395 aa).

The next 8 membrane-spanning stretches (helical) occupy residues 15-35, 56-76, 86-106, 131-151, 175-195, 254-274, 298-318, and 348-368; these read ILAF…VTVF, WPWI…NIII, FHAP…FQIV, AVLL…LITW, WFSF…IFIA, LANI…FAIV, IAIT…TQFV, and VYIP…QVVI.

Its subcellular location is the cell membrane. This is an uncharacterized protein from Mycoplasma pneumoniae (strain ATCC 29342 / M129 / Subtype 1) (Mycoplasmoides pneumoniae).